A 364-amino-acid polypeptide reads, in one-letter code: Aminomethyltransferase (364 aa).

Belongs to the GcvT family. The glycine cleavage system is composed of four proteins: P, T, L and H.

The enzyme catalyses N(6)-[(R)-S(8)-aminomethyldihydrolipoyl]-L-lysyl-[protein] + (6S)-5,6,7,8-tetrahydrofolate = N(6)-[(R)-dihydrolipoyl]-L-lysyl-[protein] + (6R)-5,10-methylene-5,6,7,8-tetrahydrofolate + NH4(+). Functionally, the glycine cleavage system catalyzes the degradation of glycine. In Salmonella dublin (strain CT_02021853), this protein is Aminomethyltransferase.